A 682-amino-acid chain; its full sequence is Potassium-transporting ATPase ATP-binding subunit (682 aa).

4 consecutive transmembrane segments (helical) span residues 34 to 54, 58 to 78, 219 to 239, and 254 to 274; these read PVMF…LAMV, IAGS…TVLF, IALT…TATL, and VLVA…LSAI. Catalysis depends on Asp307, which acts as the 4-aspartylphosphate intermediate. ATP contacts are provided by residues Asp344, Glu348, 377–384, and Lys395; that span reads FTAQSRMS. Mg(2+) is bound by residues Asp518 and Asp522. 3 consecutive transmembrane segments (helical) span residues 588-608, 616-636, and 662-682; these read FAII…LNVM, AILS…PLAL, and LVVP…LGLA.

It belongs to the cation transport ATPase (P-type) (TC 3.A.3) family. Type IA subfamily. In terms of assembly, the system is composed of three essential subunits: KdpA, KdpB and KdpC.

The protein localises to the cell inner membrane. The enzyme catalyses K(+)(out) + ATP + H2O = K(+)(in) + ADP + phosphate + H(+). In terms of biological role, part of the high-affinity ATP-driven potassium transport (or Kdp) system, which catalyzes the hydrolysis of ATP coupled with the electrogenic transport of potassium into the cytoplasm. This subunit is responsible for energy coupling to the transport system and for the release of the potassium ions to the cytoplasm. This Salmonella paratyphi A (strain ATCC 9150 / SARB42) protein is Potassium-transporting ATPase ATP-binding subunit.